Here is a 105-residue protein sequence, read N- to C-terminus: uncharacterized protein (105 aa).

Helical transmembrane passes span 3 to 23 (ISPL…QALF), 41 to 61 (DLVN…ALVS), and 63 to 83 (AFPV…TFIY).

It localises to the cell membrane. This is an uncharacterized protein from Methanocaldococcus jannaschii (strain ATCC 43067 / DSM 2661 / JAL-1 / JCM 10045 / NBRC 100440) (Methanococcus jannaschii).